We begin with the raw amino-acid sequence, 103 residues long: Large ribosomal subunit protein bL21 (103 aa).

It belongs to the bacterial ribosomal protein bL21 family. In terms of assembly, part of the 50S ribosomal subunit. Contacts protein L20.

Its function is as follows. This protein binds to 23S rRNA in the presence of protein L20. This Chromobacterium violaceum (strain ATCC 12472 / DSM 30191 / JCM 1249 / CCUG 213 / NBRC 12614 / NCIMB 9131 / NCTC 9757 / MK) protein is Large ribosomal subunit protein bL21.